Consider the following 295-residue polypeptide: 4-diphosphocytidyl-2-C-methyl-D-erythritol kinase (295 aa).

K22 is an active-site residue. Position 106–116 (106–116) interacts with ATP; it reads PAGGGFGGGSS. D148 is an active-site residue.

This sequence belongs to the GHMP kinase family. IspE subfamily.

It carries out the reaction 4-CDP-2-C-methyl-D-erythritol + ATP = 4-CDP-2-C-methyl-D-erythritol 2-phosphate + ADP + H(+). It functions in the pathway isoprenoid biosynthesis; isopentenyl diphosphate biosynthesis via DXP pathway; isopentenyl diphosphate from 1-deoxy-D-xylulose 5-phosphate: step 3/6. In terms of biological role, catalyzes the phosphorylation of the position 2 hydroxy group of 4-diphosphocytidyl-2C-methyl-D-erythritol. The polypeptide is 4-diphosphocytidyl-2-C-methyl-D-erythritol kinase (Xanthomonas campestris pv. campestris (strain 8004)).